Reading from the N-terminus, the 88-residue chain is Kunitz-type U15-theraphotoxin-Hs1f (88 aa).

The first 27 residues, 1–27 (MGTARFLSAVLLLSVLLMVTFPALLSA), serve as a signal peptide directing secretion. Positions 28–33 (EYHDGR) are excised as a propeptide. The BPTI/Kunitz inhibitor domain occupies 37–85 (CSLPSDSGDCLRLFEMWYFDGTTCTKFVYGGYGGNDNRFPTEKACMKRC). 2 cysteine pairs are disulfide-bonded: C37-C85 and C60-C81.

The protein belongs to the venom Kunitz-type family. 03 (sub-Kunitz) subfamily. In terms of tissue distribution, expressed by the venom gland.

The protein localises to the secreted. Serine protease inhibitor that inhibits trypsin at a molar ratio of 1:1. The sequence is that of Kunitz-type U15-theraphotoxin-Hs1f from Cyriopagopus schmidti (Chinese bird spider).